The following is a 248-amino-acid chain: NADP-dependent 3-hydroxy acid dehydrogenase YdfG (248 aa).

NADP(+) contacts are provided by residues 7–12 (GATAGF), 32–33 (RR), 54–55 (DV), and Asn81. Residue Ser134 participates in substrate binding. Residues Tyr147, Lys151, and 177–185 (PGLVGGTEF) each bind NADP(+). Residue Tyr147 is the Proton acceptor of the active site.

This sequence belongs to the short-chain dehydrogenases/reductases (SDR) family. Homotetramer.

It catalyses the reaction 3-hydroxypropanoate + NADP(+) = 3-oxopropanoate + NADPH + H(+). It carries out the reaction L-allo-threonine + NADP(+) = aminoacetone + CO2 + NADPH. NADP-dependent dehydrogenase with broad substrate specificity acting on 3-hydroxy acids. Catalyzes the NADP-dependent oxidation of L-allo-threonine to L-2-amino-3-keto-butyrate, which is spontaneously decarboxylated into aminoacetone. Also acts on D-threonine, L-serine, D-serine, D-3-hydroxyisobutyrate, L-3-hydroxyisobutyrate, D-glycerate and L-glycerate. Able to catalyze the reduction of the malonic semialdehyde to 3-hydroxypropionic acid. YdfG is apparently supplementing RutE, the presumed malonic semialdehyde reductase involved in pyrimidine degradation since both are able to detoxify malonic semialdehyde. The polypeptide is NADP-dependent 3-hydroxy acid dehydrogenase YdfG (Escherichia coli O157:H7).